We begin with the raw amino-acid sequence, 672 residues long: tRNA 5-methylaminomethyl-2-thiouridine biosynthesis bifunctional protein MnmC (672 aa).

The tRNA (mnm(5)s(2)U34)-methyltransferase stretch occupies residues 1-241; it reads MHKVQFADVH…KRECLQGVKA (241 aa). The tract at residues 269–672 is FAD-dependent cmnm(5)s(2)U34 oxidoreductase; the sequence is IGGGIASVFS…LLKGSQVKQG (404 aa).

It in the N-terminal section; belongs to the methyltransferase superfamily. tRNA (mnm(5)s(2)U34)-methyltransferase family. In the C-terminal section; belongs to the DAO family. FAD is required as a cofactor.

It localises to the cytoplasm. The enzyme catalyses 5-aminomethyl-2-thiouridine(34) in tRNA + S-adenosyl-L-methionine = 5-methylaminomethyl-2-thiouridine(34) in tRNA + S-adenosyl-L-homocysteine + H(+). Catalyzes the last two steps in the biosynthesis of 5-methylaminomethyl-2-thiouridine (mnm(5)s(2)U) at the wobble position (U34) in tRNA. Catalyzes the FAD-dependent demodification of cmnm(5)s(2)U34 to nm(5)s(2)U34, followed by the transfer of a methyl group from S-adenosyl-L-methionine to nm(5)s(2)U34, to form mnm(5)s(2)U34. The protein is tRNA 5-methylaminomethyl-2-thiouridine biosynthesis bifunctional protein MnmC of Pasteurella multocida (strain Pm70).